A 399-amino-acid polypeptide reads, in one-letter code: L-methionine gamma-lyase (399 aa).

Residues 59 to 61 (YTR) and 89 to 90 (GM) contribute to the pyridoxal 5'-phosphate site. Y114 contributes to the substrate binding site. A pyridoxal 5'-phosphate-binding site is contributed by 209–211 (SAT). K212 bears the N6-(pyridoxal phosphate)lysine mark. R376 contacts substrate.

The protein belongs to the trans-sulfuration enzymes family. L-methionine gamma-lyase subfamily. In terms of assembly, homotetramer; dimer of active dimers. Pyridoxal 5'-phosphate is required as a cofactor.

The catalysed reaction is L-methionine + H2O = methanethiol + 2-oxobutanoate + NH4(+). In terms of biological role, catalyzes the alpha,gamma-elimination of L-methionine to produce methanethiol, 2-oxobutanoate and ammonia. The chain is L-methionine gamma-lyase from Pseudomonas deceptionensis.